The chain runs to 119 residues: MGNSFRSDRVAVEIQREINDILRNKVRDPRVQDVNITDVQLTGDLSQATVYYSLLSNLASDNEKAATALKKATGLFKSELAKRMTIFKIPDLTFAKDESVEYGSKIDELLRGLNDKSEY.

The protein belongs to the RbfA family. In terms of assembly, monomer. Binds 30S ribosomal subunits, but not 50S ribosomal subunits or 70S ribosomes.

The protein resides in the cytoplasm. Functionally, one of several proteins that assist in the late maturation steps of the functional core of the 30S ribosomal subunit. Associates with free 30S ribosomal subunits (but not with 30S subunits that are part of 70S ribosomes or polysomes). Required for efficient processing of 16S rRNA. May interact with the 5'-terminal helix region of 16S rRNA. This is Ribosome-binding factor A from Lactococcus lactis subsp. cremoris (strain SK11).